Reading from the N-terminus, the 876-residue chain is Valine--tRNA ligase (876 aa).

Positions 44-54 (PNVTGKLHLGH) match the 'HIGH' region motif. Positions 520-524 (KMSKS) match the 'KMSKS' region motif. Position 523 (lysine 523) interacts with ATP. Positions 805 to 876 (LEGLIDMDKE…VKNRIEQLKA (72 aa)) form a coiled coil.

This sequence belongs to the class-I aminoacyl-tRNA synthetase family. ValS type 1 subfamily. Monomer.

It is found in the cytoplasm. It carries out the reaction tRNA(Val) + L-valine + ATP = L-valyl-tRNA(Val) + AMP + diphosphate. Catalyzes the attachment of valine to tRNA(Val). As ValRS can inadvertently accommodate and process structurally similar amino acids such as threonine, to avoid such errors, it has a 'posttransfer' editing activity that hydrolyzes mischarged Thr-tRNA(Val) in a tRNA-dependent manner. The chain is Valine--tRNA ligase from Staphylococcus haemolyticus (strain JCSC1435).